We begin with the raw amino-acid sequence, 1686 residues long: Gag-Pol polyprotein (1686 aa).

Gly2 carries N-myristoyl glycine; by host lipidation. 2 disordered regions span residues 110-199 (RPVA…PLRA) and 419-486 (HKRE…RPPL). The PTAP/PSAP motif motif lies at 116 to 119 (PSAP). Over residues 137 to 151 (PTPPPYPAALPPPLA) the composition is skewed to pro residues. The PPXY motif signature appears at 139–142 (PPPY). Positions 407 to 444 (LQDLVKEAEKVYHKRETEEERQEREKKEAEEKERRRDR) form a coiled coil. Residues 419-442 (HKRETEEERQEREKKEAEEKERRR) are compositionally biased toward basic and acidic residues. Residues 461–476 (EGSTGRQTGNLSNQAK) are compositionally biased toward polar residues. The CCHC-type zinc finger occupies 489-506 (DQCAYCKEKGHWARECPR). Residues 543–613 (IEFLVDTGAE…CPAPLLGRDL (71 aa)) form the Peptidase A2 domain. Asp548 functions as the Protease; shared with dimeric partner in the catalytic mechanism. The Reverse transcriptase domain maps to 720-911 (LDLGVLVPCR…REVTYLGYLL (192 aa)). Residues Asp788, Asp862, Asp863, Asp1161, Glu1199, Asp1220, and Asp1290 each contribute to the Mg(2+) site. One can recognise an RNase H type-1 domain in the interval 1152-1298 (LPGVPTWYTD…ADEAAKQAAL (147 aa)). A disordered region spans residues 1304 to 1325 (AGTTKPQEPIEPAQEKTRPREL). Over residues 1316–1325 (AQEKTRPREL) the composition is skewed to basic and acidic residues. An HHCC-type zinc finger spans residues 1338–1376 (HQLTHLGPEKLLQLVNRTSLLIPNLQSAVREVTSQCQAC). Positions 1393-1551 (RGDRPGVYWE…TPYEILYGGP (159 aa)) constitute an Integrase catalytic domain. Positions 1404 and 1463 each coordinate Mg(2+).

This sequence belongs to the retroviral Pol polyprotein family. As to quaternary structure, homohexamer; further associates as homomultimer. The virus core is composed of a lattice formed from hexagonal rings, each containing six capsid monomers. Interacts (via PPXY motif) with host NEDD4. Interacts (via PSAP motif) with host TSG101. In terms of assembly, the reverse transcriptase is a monomer (Potential). Interacts (via RNase domains) with host release factor ETF1; this interaction is essential for translational readthrough of amber codon between viral gag and pol genes, as well as for viral replication. As to quaternary structure, homodimer. It depends on Mg(2+) as a cofactor. Specific enzymatic cleavages by the viral protease yield mature proteins. The protease is released by autocatalytic cleavage. The polyprotein is cleaved during and after budding, this process is termed maturation. Post-translationally, phosphorylated on serine residues.

It localises to the virion. Its subcellular location is the host cell membrane. It is found in the host late endosome membrane. The protein resides in the host endosome. The protein localises to the host multivesicular body. It localises to the host cytoplasm. It carries out the reaction DNA(n) + a 2'-deoxyribonucleoside 5'-triphosphate = DNA(n+1) + diphosphate. The catalysed reaction is Endonucleolytic cleavage to 5'-phosphomonoester.. With respect to regulation, most efficiently inhibited by Amprenavir, which is able to block Gag-Pol processing in infected cells. Plays a role in budding and is processed by the viral protease during virion maturation outside the cell. During budding, it recruits, in a PPXY-dependent or independent manner, Nedd4-like ubiquitin ligases that conjugate ubiquitin molecules to Gag-Pol, or to Gag-Pol binding host factors. Interaction with HECT ubiquitin ligases probably links the viral protein to the host ESCRT pathway and facilitates release. Functionally, targets Gag and gag-pol polyproteins to the plasma membrane via a multipartite membrane binding signal, that includes its myristoylated N-terminus. Also mediates nuclear localization of the pre-integration complex. In terms of biological role, constituent of the pre-integration complex (PIC) which tethers the latter to mitotic chromosomes. This allows the integration of the viral genome into the host DNA. Its function is as follows. Forms the spherical core of the virion that encapsulates the genomic RNA-nucleocapsid complex. Involved in the packaging and encapsidation of two copies of the genome. Binds with high affinity to conserved UCUG elements within the packaging signal, located near the 5'-end of the genome. This binding is dependent on genome dimerization. Acts as a nucleic acid chaperone which is involved in rearrangement of nucleic acid secondary structures during gRNA retrotranscription. Functionally, the aspartyl protease mediates proteolytic cleavages of Gag and Gag-Pol polyproteins during or shortly after the release of the virion from the plasma membrane. Cleavages take place as an ordered, step-wise cascade to yield mature proteins. This process is called maturation. Displays maximal activity during the budding process just prior to particle release from the cell. In terms of biological role, RT is a multifunctional enzyme that converts the viral dimeric RNA genome into dsDNA in the cytoplasm, shortly after virus entry into the cell. This enzyme displays a DNA polymerase activity that can copy either DNA or RNA templates, and a ribonuclease H (RNase H) activity that cleaves the RNA strand of RNA-DNA heteroduplexes in a partially processive 3' to 5' endonucleasic mode. Conversion of viral genomic RNA into dsDNA requires many steps. A tRNA binds to the primer-binding site (PBS) situated at the 5' end of the viral RNA. RT uses the 3' end of the tRNA primer to perform a short round of RNA-dependent minus-strand DNA synthesis. The reading proceeds through the U5 region and ends after the repeated (R) region which is present at both ends of viral RNA. The portion of the RNA-DNA heteroduplex is digested by the RNase H, resulting in a ssDNA product attached to the tRNA primer. This ssDNA/tRNA hybridizes with the identical R region situated at the 3' end of viral RNA. This template exchange, known as minus-strand DNA strong stop transfer, can be either intra- or intermolecular. RT uses the 3' end of this newly synthesized short ssDNA to perform the RNA-dependent minus-strand DNA synthesis of the whole template. RNase H digests the RNA template except for a polypurine tract (PPT) situated at the 5' end of the genome. It is not clear if both polymerase and RNase H activities are simultaneous. RNase H probably can proceed both in a polymerase-dependent (RNA cut into small fragments by the same RT performing DNA synthesis) and a polymerase-independent mode (cleavage of remaining RNA fragments by free RTs). Secondly, RT performs DNA-directed plus-strand DNA synthesis using the PPT that has not been removed by RNase H as primers. PPT and tRNA primers are then removed by RNase H. The 3' and 5' ssDNA PBS regions hybridize to form a circular dsDNA intermediate. Strand displacement synthesis by RT to the PBS and PPT ends produces a blunt ended, linear dsDNA copy of the viral genome that includes long terminal repeats (LTRs) at both ends. Its function is as follows. Catalyzes viral DNA integration into the host chromosome, by performing a series of DNA cutting and joining reactions. This enzyme activity takes place after virion entry into a cell and reverse transcription of the RNA genome in dsDNA. The first step in the integration process is 3' processing. This step requires a complex comprising the viral genome, matrix protein and integrase. This complex is called the pre-integration complex (PIC). The integrase protein removes 2 nucleotides from each 3' end of the viral DNA, leaving recessed CA OH's at the 3' ends. In the second step that requires cell division, the PIC enters cell nucleus. In the third step, termed strand transfer, the integrase protein joins the previously processed 3' ends to the 5' ends of strands of target cellular DNA at the site of integration. The last step is viral DNA integration into host chromosome. In Hylobatidae (gibbons), this protein is Gag-Pol polyprotein (pol).